The chain runs to 291 residues: Glycine--tRNA ligase alpha subunit (291 aa).

It belongs to the class-II aminoacyl-tRNA synthetase family. In terms of assembly, tetramer of two alpha and two beta subunits.

The protein localises to the cytoplasm. It carries out the reaction tRNA(Gly) + glycine + ATP = glycyl-tRNA(Gly) + AMP + diphosphate. This chain is Glycine--tRNA ligase alpha subunit, found in Trichlorobacter lovleyi (strain ATCC BAA-1151 / DSM 17278 / SZ) (Geobacter lovleyi).